The chain runs to 237 residues: Cytidylate kinase (237 aa).

ATP is bound at residue 15 to 23 (GPSGSGKGT).

It belongs to the cytidylate kinase family. Type 1 subfamily.

It is found in the cytoplasm. The enzyme catalyses CMP + ATP = CDP + ADP. It catalyses the reaction dCMP + ATP = dCDP + ADP. The sequence is that of Cytidylate kinase from Coxiella burnetii (strain RSA 493 / Nine Mile phase I).